The primary structure comprises 36 residues: Glucagon (36 aa).

The protein belongs to the glucagon family. As to expression, produced by the X-cells of the islets of pancreas.

The protein localises to the secreted. Functionally, promotes hydrolysis of glycogen and lipids, and raises the blood sugar level. This Hydrolagus colliei (Spotted ratfish) protein is Glucagon (gcg).